The chain runs to 100 residues: uncharacterized protein (100 aa).

3 consecutive transmembrane segments (helical) span residues 9 to 29 (VYTY…SWVV), 41 to 61 (PYLI…ITAP), and 72 to 92 (SIPF…FLGI).

It is found in the membrane. This is an uncharacterized protein from Saccharomyces cerevisiae (strain ATCC 204508 / S288c) (Baker's yeast).